We begin with the raw amino-acid sequence, 365 residues long: Anthranilate phosphoribosyltransferase (365 aa).

5-phospho-alpha-D-ribose 1-diphosphate contacts are provided by residues G96, 99-100 (GD), T104, 106-109 (NIST), 124-132 (KHGNRSVSS), and S136. Residue G96 coordinates anthranilate. Residue S108 coordinates Mg(2+). N127 contacts anthranilate. R182 is an anthranilate binding site. The Mg(2+) site is built by D240 and E241.

The protein belongs to the anthranilate phosphoribosyltransferase family. As to quaternary structure, homodimer. Mg(2+) is required as a cofactor.

It catalyses the reaction N-(5-phospho-beta-D-ribosyl)anthranilate + diphosphate = 5-phospho-alpha-D-ribose 1-diphosphate + anthranilate. It participates in amino-acid biosynthesis; L-tryptophan biosynthesis; L-tryptophan from chorismate: step 2/5. Catalyzes the transfer of the phosphoribosyl group of 5-phosphorylribose-1-pyrophosphate (PRPP) to anthranilate to yield N-(5'-phosphoribosyl)-anthranilate (PRA). The chain is Anthranilate phosphoribosyltransferase from Colwellia psychrerythraea (strain 34H / ATCC BAA-681) (Vibrio psychroerythus).